The primary structure comprises 134 residues: Psoriasis susceptibility 1 candidate gene 2 protein homolog (134 aa).

An N-terminal signal peptide occupies residues 1–21 (MLTWKLLGLLVLCLCAGGISG). Residues 18 to 134 (GISGNGDPSP…DLDPPQEEYR (117 aa)) are disordered. Composition is skewed to pro residues over residues 39-67 (PPLP…PPGS) and 81-98 (PPKP…PDDP). Residues 122–134 (EEPDLDPPQEEYR) are compositionally biased toward acidic residues.

The protein localises to the secreted. The chain is Psoriasis susceptibility 1 candidate gene 2 protein homolog (Psors1c2) from Mus musculus (Mouse).